A 324-amino-acid polypeptide reads, in one-letter code: Zinc metalloproteinase leucurolysin-B (324 aa).

One can recognise a Peptidase M12B domain in the interval 1 to 119; the sequence is DTVLLNRISH…LNPQCILNEP (119 aa). A Ca(2+)-binding site is contributed by Asp11. 3 disulfides stabilise this stretch: Cys34–Cys114, Cys74–Cys98, and Cys76–Cys81. His59 is a binding site for Zn(2+). Glu60 is a catalytic residue. Residues His63 and His69 each contribute to the Zn(2+) site. Asn97 carries an N-linked (GlcNAc...) asparagine glycan. The Ca(2+) site is built by Cys114, Asn117, Val129, Asn132, Leu134, Glu136, Glu139, and Asp142. In terms of domain architecture, Disintegrin spans 127-213; that stretch reads PPVCGNELLE…QCPTDDFKRN (87 aa). 13 disulfide bridges follow: Cys130–Cys159, Cys141–Cys154, Cys143–Cys149, Cys153–Cys176, Cys167–Cys173, Cys172–Cys198, Cys185–Cys205, Cys192–Cys224, Cys217–Cys229, Cys236–Cys286, Cys251–Cys295, Cys264–Cys274, and Cys281–Cys315. The short motif at 191–193 is the D/ECD-tripeptide element; that stretch reads ECD. Asn296 and Asn305 each carry an N-linked (GlcNAc...) asparagine glycan.

Belongs to the venom metalloproteinase (M12B) family. P-III subfamily. P-IIIa sub-subfamily. As to quaternary structure, monomer. It depends on Zn(2+) as a cofactor. N-glycosylated. Post-translationally, the N-terminus is blocked. As to expression, expressed by the venom gland.

It localises to the secreted. Its activity is regulated as follows. Inhibited by EDTA, but not by PMSF. Pre-incubation with 2 mM DTT completely abolishes activity. Functionally, snake venom zinc metalloproteinase that acts as a potent hemorrhagic toxin. Hydrolyzes the insulin B chain at the 14-Ala-|-Leu-15 bond but not the 16-Tyr-|-Leu-17 bond. Degrades the alpha-chain of fibrin and hydrolyzes the Aalpha-chain of fibrinogen (FGA) while leaving the beta and gamma chains unaffected. Degrades type-I collagen and its gelatin. Degrades the alpha-1 chain of type-IV collagen and its gelatin but not the alpha-2 chain. Degrades plasma fibronectin, plasma vitronectin and basement membrane enactin. It inhibits collagen-induced platelet aggregation. In Bothrops leucurus (Whitetail lancehead), this protein is Zinc metalloproteinase leucurolysin-B.